The chain runs to 114 residues: Putative antiporter subunit mnhC2 (114 aa).

3 helical membrane passes run Leu-3 to Ile-23, Leu-25 to Ser-45, and Ala-72 to Ile-92.

This sequence belongs to the CPA3 antiporters (TC 2.A.63) subunit C family. In terms of assembly, may form a heterooligomeric complex that consists of seven subunits: mnhA2, mnhB2, mnhC2, mnhD2, mnhE2, mnhF2 and mnhG2.

The protein resides in the cell membrane. The chain is Putative antiporter subunit mnhC2 (mnhC2) from Staphylococcus epidermidis (strain ATCC 12228 / FDA PCI 1200).